We begin with the raw amino-acid sequence, 171 residues long: Signal peptidase complex catalytic subunit SEC11 (171 aa).

Residues 1 to 6 lie on the Cytoplasmic side of the membrane; sequence MNIRQQ. Residues 7-24 traverse the membrane as a helical; Signal-anchor for type II membrane protein segment; it reads LVQLLNLAMVLSTAFMFW. Residues 25-171 are Lumenal-facing; sequence KGLGLVTNSN…MALSTLLTRE (147 aa). Catalysis depends on charge relay system residues serine 44, histidine 83, and aspartate 113. The C-terminal short (CTS) helix stretch occupies residues 157 to 168; sequence GLLGLMALSTLL.

It belongs to the peptidase S26B family. As to quaternary structure, component of the signal peptidase complex (SPC) composed of a catalytic subunit SEC11 and three accessory subunits SPC1, SPC2 and SPC3. The complex induces a local thinning of the ER membrane which is used to measure the length of the signal peptide (SP) h-region of protein substrates. This ensures the selectivity of the complex towards h-regions shorter than 18-20 amino acids. SPC associates with the translocon complex.

It is found in the endoplasmic reticulum membrane. It carries out the reaction Cleavage of hydrophobic, N-terminal signal or leader sequences from secreted and periplasmic proteins.. In terms of biological role, catalytic component of the signal peptidase complex (SPC) which catalyzes the cleavage of N-terminal signal sequences from nascent proteins as they are translocated into the lumen of the endoplasmic reticulum. Specifically cleaves N-terminal signal peptides that contain a hydrophobic alpha-helix (h-region) shorter than 18-20 amino acids. This chain is Signal peptidase complex catalytic subunit SEC11 (SEC11), found in Komagataella phaffii (strain GS115 / ATCC 20864) (Yeast).